A 203-amino-acid chain; its full sequence is Recombination protein RecR (203 aa).

Residues 56–71 (CEVCGNVSDADRCRIC) form a C4-type zinc finger. Residues 79 to 179 (SLVCVVEEPK…TVTRIASGLP (101 aa)) enclose the Toprim domain.

Belongs to the RecR family.

Functionally, may play a role in DNA repair. It seems to be involved in an RecBC-independent recombinational process of DNA repair. It may act with RecF and RecO. The chain is Recombination protein RecR from Mycobacterium sp. (strain JLS).